A 942-amino-acid polypeptide reads, in one-letter code: Serine/threonine-protein kinase ATG1 (942 aa).

The Protein kinase domain occupies 11-312 (YVVEKEIGKG…FEEFFNNKIV (302 aa)). Residues 17-25 (IGKGSFATV) and Lys-41 each bind ATP. Catalysis depends on Asp-159, which acts as the Proton acceptor. Polar residues predominate over residues 435–452 (NSSRVNKLDKSNLSGKSD). 3 disordered regions span residues 435 to 454 (NSSR…SDSS), 505 to 529 (QPHN…SRRA), and 817 to 836 (NSKP…NDSN). Low complexity predominate over residues 515–529 (RAPSTTSGGTSSRRA). The segment covering 819-834 (KPGTHNQSPKSKISND) has biased composition (polar residues).

It belongs to the protein kinase superfamily. Ser/Thr protein kinase family. APG1/unc-51/ULK1 subfamily. As to quaternary structure, homodimer. Forms a ternary complex with ATG13 and ATG17.

The protein localises to the cytoplasm. Its subcellular location is the preautophagosomal structure membrane. It catalyses the reaction L-seryl-[protein] + ATP = O-phospho-L-seryl-[protein] + ADP + H(+). The enzyme catalyses L-threonyl-[protein] + ATP = O-phospho-L-threonyl-[protein] + ADP + H(+). Its function is as follows. Serine/threonine protein kinase involved in the cytoplasm to vacuole transport (Cvt) and found to be essential in autophagy, where it is required for the formation of autophagosomes. Involved in the clearance of protein aggregates which cannot be efficiently cleared by the proteasome. Required for selective autophagic degradation of the nucleus (nucleophagy) as well as for mitophagy which contributes to regulate mitochondrial quantity and quality by eliminating the mitochondria to a basal level to fulfill cellular energy requirements and preventing excess ROS production. Also involved in endoplasmic reticulum-specific autophagic process, in selective removal of ER-associated degradation (ERAD) substrates. Plays a key role in ATG9 and ATG23 cycling through the pre-autophagosomal structure and is necessary to promote ATG18 binding to ATG9 through phosphorylation of ATG9. Catalyzes phosphorylation of ATG4, decreasing the interaction between ATG4 and ATG8 and impairing deconjugation of PE-conjugated forms of ATG8. Contributes to virulence by conferring resistance to unstable nutrient environments and immune defense of hosts. The polypeptide is Serine/threonine-protein kinase ATG1 (Candida glabrata (strain ATCC 2001 / BCRC 20586 / JCM 3761 / NBRC 0622 / NRRL Y-65 / CBS 138) (Yeast)).